Here is a 418-residue protein sequence, read N- to C-terminus: Endoglucanase EG-II (418 aa).

Residues 1–21 form the signal peptide; that stretch reads MNKSVAPLLLAASILYGGAVA. Position 22 is a pyrrolidone carboxylic acid (Gln-22). Residues 22–57 enclose the CBM1 domain; sequence QQTVWGQCGGIGWSGPTNCAPGSACSTLNPYYAQCI. Residues 58 to 91 form a linker region; it reads PGATTITTSTRPPSGPTTTTRATSTSSSTPPTSS. The disordered stretch occupies residues 63 to 91; that stretch reads ITTSTRPPSGPTTTTRATSTSSSTPPTSS. Positions 92-418 are catalytic; it reads GVRFAGVNIA…SLVSSCLARK (327 aa). Cysteines 107 and 113 form a disulfide. N-linked (GlcNAc) asparagine glycosylation occurs at Asn-124. Cys-183 and Cys-190 are joined by a disulfide. The active-site Proton donor/acceptor is Glu-239. Cystine bridges form between Cys-323–Cys-359 and Cys-364–Cys-414. Catalysis depends on Glu-350, which acts as the Nucleophile.

Belongs to the glycosyl hydrolase 5 (cellulase A) family.

The protein resides in the secreted. The enzyme catalyses Endohydrolysis of (1-&gt;4)-beta-D-glucosidic linkages in cellulose, lichenin and cereal beta-D-glucans.. Its function is as follows. Endoglucanase (EG) that cleaves the internal beta-1,4-glucosidic bonds in cellulose. The degradation of cellulose involves an interplay between different cellulolytic enzymes. Hydrolysis starts with EGs, which cut internal glycosidic linkages to reduce the polymerization degree of the substrate and creates new chain ends for exocellobiohydrolases (CBHs). The CBH release the disaccharide cellobiose from the non-reducing end of the cellulose polymer chain. Finally, beta-1,4-glucosidases hydrolyze the cellobiose and other short cello-oligosaccharides into glucose units. The polypeptide is Endoglucanase EG-II (egl2) (Hypocrea jecorina (Trichoderma reesei)).